A 675-amino-acid polypeptide reads, in one-letter code: Protein C-mannosyl-transferase DPY19L1 (675 aa).

The disordered stretch occupies residues 1-22; sequence MEGRPPPEGRPPPRPRTGRAPR. A run of 11 helical transmembrane segments spans residues 66 to 88, 156 to 176, 186 to 208, 236 to 254, 260 to 279, 286 to 303, 309 to 325, 334 to 354, 414 to 434, 449 to 469, and 491 to 511; these read LYYS…WMIM, ACFY…LFFI, LGGL…VMWT, LYRG…FMLP, FVLL…GYID, IIYI…LMFG, TSYY…ILAM, VSEL…TVIL, VVLV…WGVL, GELV…ILIM, and LFGW…ILAA.

This sequence belongs to the dpy-19 family. Widely expressed.

The protein resides in the endoplasmic reticulum membrane. The catalysed reaction is L-tryptophyl-[protein] + a di-trans,poly-cis-dolichyl beta-D-mannosyl phosphate = C-alpha-D-mannosyl-L-tryptophyl-[protein] + a di-trans,poly-cis-dolichyl phosphate + H(+). It participates in protein modification; protein glycosylation. Functionally, C-mannosyltransferase that mediates the C-mannosylation tryptophan residues on target proteins. The reaction occurs on the luminal side of the endoplasmic reticulum and involves the transfer of a mannose unit from a dolichylphosphate mannose (Dol-P-Man) donor to an acceptor protein containing a WxxW consensus sequence. C-mannosylates the first two tryptophans in the WxxWxxWxxC motif in thrombospondin (TSP) type-1 of UNC5A. Regulates neurite extension during development. This chain is Protein C-mannosyl-transferase DPY19L1 (DPY19L1), found in Homo sapiens (Human).